We begin with the raw amino-acid sequence, 359 residues long: 4-hydroxyproline 2-epimerase (359 aa).

Residue Cys-126 is the Proton acceptor of the active site. Substrate-binding positions include 127-128 (GH), His-248, and Asp-274. The active-site Proton donor is Cys-278. 279–280 (GT) contributes to the substrate binding site.

Belongs to the proline racemase family.

The enzyme catalyses trans-4-hydroxy-L-proline = cis-4-hydroxy-D-proline. In terms of biological role, catalyzes the epimerization of trans-4-hydroxy-L-proline (t4LHyp) to cis-4-hydroxy-D-proline (c4DHyp). Is likely involved in a degradation pathway that converts t4LHyp to alpha-ketoglutarate. Displays no proline racemase activity. The protein is 4-hydroxyproline 2-epimerase of Planctopirus limnophila (strain ATCC 43296 / DSM 3776 / IFAM 1008 / Mu 290) (Planctomyces limnophilus).